The following is a 175-amino-acid chain: Nucleoside triphosphate/diphosphate phosphatase (175 aa).

Arg-23 functions as the Proton donor in the catalytic mechanism. 6 residues coordinate Mg(2+): Asn-87, Asp-103, Asp-105, Asp-107, Asp-120, and Glu-123.

This sequence belongs to the Ntdp family. It depends on Mg(2+) as a cofactor.

The catalysed reaction is a ribonucleoside 5'-triphosphate + H2O = a ribonucleoside 5'-diphosphate + phosphate + H(+). It catalyses the reaction a ribonucleoside 5'-diphosphate + H2O = a ribonucleoside 5'-phosphate + phosphate + H(+). Functionally, has nucleoside phosphatase activity towards nucleoside triphosphates and nucleoside diphosphates. This Shouchella clausii (strain KSM-K16) (Alkalihalobacillus clausii) protein is Nucleoside triphosphate/diphosphate phosphatase.